We begin with the raw amino-acid sequence, 115 residues long: Glutaredoxin-like protein C5orf63 homolog (115 aa).

C40 and C43 are joined by a disulfide.

It belongs to the glutaredoxin family. YDR286C subfamily.

The protein is Glutaredoxin-like protein C5orf63 homolog of Mus musculus (Mouse).